The following is a 247-amino-acid chain: Chymase (247 aa).

Positions 1 to 19 (MLLLPLPLLLLFLCSRAEA) are cleaved as a signal peptide. Positions 20-21 (GE) are cleaved as a propeptide — activation peptide. Positions 22 to 245 (IIGGTECKPH…YRPWINKILQ (224 aa)) constitute a Peptidase S1 domain. An intrachain disulfide couples C51 to C67. The active-site Charge relay system is H66. N80 and N103 each carry an N-linked (GlcNAc...) asparagine glycan. D110 (charge relay system) is an active-site residue. Disulfide bonds link C144/C209 and C175/C188. Catalysis depends on S203, which acts as the Charge relay system.

It belongs to the peptidase S1 family. Granzyme subfamily.

It is found in the secreted. The protein resides in the cytoplasmic granule. It catalyses the reaction Preferential cleavage: Phe-|-Xaa &gt; Tyr-|-Xaa &gt; Trp-|-Xaa &gt; Leu-|-Xaa.. Functionally, major secreted protease of mast cells with suspected roles in vasoactive peptide generation, extracellular matrix degradation, and regulation of gland secretion. The polypeptide is Chymase (CMA1) (Papio hamadryas (Hamadryas baboon)).